We begin with the raw amino-acid sequence, 217 residues long: MEKLLLGVLLLAFLPEGMTQKDLRGKVFIFPEQSDTAYVTLIPRVRKPLRSFTLCLKAFTDLTRPYSLFSYSTKSKDNELLLFVNKVGEYELHIGNTKVTFKVPRPPYGPVHLCVSWESVSGIAELWMNSRPVGRKGLRRGYTLGQDARIILGQEQDSFGGKFDAKQSFVGEIWDVSLWDHVVSLKNLCFTCYTSNILNWKALIYQAKGYVVVKPKL.

An N-terminal signal peptide occupies residues 1-19 (MEKLLLGVLLLAFLPEGMT). Residues 24-217 (RGKVFIFPEQ…KGYVVVKPKL (194 aa)) form the Pentraxin (PTX) domain. Cys55 and Cys114 are joined by a disulfide. Residues Asp77, Asn78, Glu155, Gln156, Asp157, and Gln167 each coordinate Ca(2+).

Belongs to the pentraxin family. In terms of assembly, homopentamer. Pentraxin (or pentaxin) have a discoid arrangement of 5 non-covalently bound subunits. Ca(2+) is required as a cofactor.

The protein resides in the secreted. This is Mucosal pentraxin (MPTX) from Bos taurus (Bovine).